Here is a 429-residue protein sequence, read N- to C-terminus: Enolase (429 aa).

Q163 is a (2R)-2-phosphoglycerate binding site. Residue E205 is the Proton donor of the active site. Mg(2+) contacts are provided by D242, E286, and D313. Residues K338, R367, S368, and K389 each contribute to the (2R)-2-phosphoglycerate site. Residue K338 is the Proton acceptor of the active site.

This sequence belongs to the enolase family. The cofactor is Mg(2+).

The protein resides in the cytoplasm. It is found in the secreted. It localises to the cell surface. It carries out the reaction (2R)-2-phosphoglycerate = phosphoenolpyruvate + H2O. It functions in the pathway carbohydrate degradation; glycolysis; pyruvate from D-glyceraldehyde 3-phosphate: step 4/5. Its function is as follows. Catalyzes the reversible conversion of 2-phosphoglycerate (2-PG) into phosphoenolpyruvate (PEP). It is essential for the degradation of carbohydrates via glycolysis. The polypeptide is Enolase (Geobacter metallireducens (strain ATCC 53774 / DSM 7210 / GS-15)).